The chain runs to 434 residues: Enolase (434 aa).

Glutamine 168 contributes to the (2R)-2-phosphoglycerate binding site. Glutamate 210 (proton donor) is an active-site residue. Positions 247, 292, and 319 each coordinate Mg(2+). Lysine 344, arginine 373, serine 374, and lysine 395 together coordinate (2R)-2-phosphoglycerate. The active-site Proton acceptor is the lysine 344.

Belongs to the enolase family. Mg(2+) is required as a cofactor.

It localises to the cytoplasm. The protein localises to the secreted. The protein resides in the cell surface. It carries out the reaction (2R)-2-phosphoglycerate = phosphoenolpyruvate + H2O. The protein operates within carbohydrate degradation; glycolysis; pyruvate from D-glyceraldehyde 3-phosphate: step 4/5. Functionally, catalyzes the reversible conversion of 2-phosphoglycerate (2-PG) into phosphoenolpyruvate (PEP). It is essential for the degradation of carbohydrates via glycolysis. This is Enolase from Endomicrobium trichonymphae.